An 89-amino-acid polypeptide reads, in one-letter code: Small ribosomal subunit protein uS15 (89 aa).

The tract at residues 1–23 (MTLNTQEKQKLINTHQNHGTDTG) is disordered.

The protein belongs to the universal ribosomal protein uS15 family. As to quaternary structure, part of the 30S ribosomal subunit. Forms a bridge to the 50S subunit in the 70S ribosome, contacting the 23S rRNA.

Functionally, one of the primary rRNA binding proteins, it binds directly to 16S rRNA where it helps nucleate assembly of the platform of the 30S subunit by binding and bridging several RNA helices of the 16S rRNA. Forms an intersubunit bridge (bridge B4) with the 23S rRNA of the 50S subunit in the ribosome. This chain is Small ribosomal subunit protein uS15, found in Prochlorococcus marinus (strain MIT 9211).